A 348-amino-acid chain; its full sequence is Rhodopsin (348 aa).

Residue Met1 is modified to N-acetylmethionine. Topologically, residues 1 to 36 (MNGTEGPNFYVPFSNKTGVVRSPFEEPQYYLAEPWQ) are extracellular. 2 N-linked (GlcNAc...) asparagine glycosylation sites follow: Asn2 and Asn15. Residues 37-61 (FSCLAAYMFMLIVLGFPINFLTLYV) traverse the membrane as a helical segment. Residues 62–73 (TIQHKKLRTPLN) are Cytoplasmic-facing. The helical transmembrane segment at 74–96 (YILLNLAIADLFMVFGGFTTTLY) threads the bilayer. Residues 97–110 (TSLHGYFVFGPTGC) lie on the Extracellular side of the membrane. Cys110 and Cys187 are disulfide-bonded. A helical membrane pass occupies residues 111–133 (DLEGFFATLGGEIALWSLVVLAI). The 'Ionic lock' involved in activated form stabilization motif lies at 134-136 (ERY). Over 134 to 152 (ERYIVVCKPMSNFRFGENH) the chain is Cytoplasmic. A helical transmembrane segment spans residues 153 to 173 (AIMGVAFTWVMALACAAPPLV). Residues 174–202 (GWSRYIPEGMQCSCGIDYYTLKPEVNNES) are Extracellular-facing. Glu201 provides a ligand contact to Zn(2+). A helical membrane pass occupies residues 203-224 (FVIYMFVVHFTIPMVVIFFCYG). Topologically, residues 225-252 (QLVFTVKEAAAQQQESATTQKAEKEVTR) are cytoplasmic. A helical transmembrane segment spans residues 253–274 (MVIIMVIAFLICWLPYAGVAFY). The Extracellular segment spans residues 275-286 (IFTHQGSNFGPI). Gln279 lines the Zn(2+) pocket. A helical membrane pass occupies residues 287–308 (LMTLPAFFAKTSAVYNPVIYIM). Residue Lys296 is modified to N6-(retinylidene)lysine. Residues 309–348 (LNKQFRTCMLTTLCCGKIPLGDDEASATASKTETSQVAPA) are Cytoplasmic-facing. Residues Cys322 and Cys323 are each lipidated (S-palmitoyl cysteine). The segment at 330–348 (DDEASATASKTETSQVAPA) is interaction with SAG. Ser334 carries the post-translational modification Phosphoserine. Thr336 is modified (phosphothreonine). The residue at position 338 (Ser338) is a Phosphoserine. Residues Thr340 and Thr342 each carry the phosphothreonine modification. Ser343 carries the phosphoserine modification.

Belongs to the G-protein coupled receptor 1 family. Opsin subfamily. In terms of assembly, homodimer. May form a complex composed of RHO, GRK1 and RCVRN in a Ca(2+)-dependent manner; RCVRN prevents the interaction between GRK1 and RHO. Interacts with GRK1. Interacts (phosphorylated form) with SAG. Interacts with GNAT1. Interacts with GNAT3. SAG and G-proteins compete for a common binding site. Interacts with PRCD; the interaction promotes PRCD stability. Forms a complex with ASAP1 and ARF4. Forms a complex with ASAP1, RAB11A, Rabin8/RAB3IP, ARF4 and RAB11FIP3; the complex regulates Golgi-to-cilia rhodopsin/RHO transport in photoreceptors. In terms of processing, phosphorylated on some or all of the serine and threonine residues present in the C-terminal region. Contains one covalently linked retinal chromophore. Upon light absorption, the covalently bound 11-cis-retinal is converted to all-trans-retinal. After hydrolysis of the Schiff base and release of the covalently bound all-trans-retinal, active rhodopsin is regenerated by binding of a fresh molecule of 11-cis-retinal.

The protein localises to the membrane. It is found in the cell projection. Its subcellular location is the cilium. It localises to the photoreceptor outer segment. Its function is as follows. Photoreceptor required for image-forming vision at low light intensity. Required for photoreceptor cell viability after birth. Light-induced isomerization of 11-cis to all-trans retinal triggers a conformational change that activates signaling via G-proteins. Subsequent receptor phosphorylation mediates displacement of the bound G-protein alpha subunit by the arrestin SAG and terminates signaling. The chain is Rhodopsin (RHO) from Caluromys philander (Bare-tailed woolly opossum).